Reading from the N-terminus, the 132-residue chain is MYVIDPIADMLTRIRNANNARHEIVDIPASKMKKAIAQILLEEGFIKDYEIIDDGKNGIIRIRLKYGPNKERAITGLKRISKPGRRVYAGKDELPRVLGGLGIAIISTSKGIMTDKKARKEGVGGEVLCYVW.

Belongs to the universal ribosomal protein uS8 family. In terms of assembly, part of the 30S ribosomal subunit. Contacts proteins S5 and S12.

In terms of biological role, one of the primary rRNA binding proteins, it binds directly to 16S rRNA central domain where it helps coordinate assembly of the platform of the 30S subunit. The protein is Small ribosomal subunit protein uS8 of Caldicellulosiruptor bescii (strain ATCC BAA-1888 / DSM 6725 / KCTC 15123 / Z-1320) (Anaerocellum thermophilum).